A 133-amino-acid chain; its full sequence is ATP synthase epsilon chain, chloroplastic (133 aa).

It belongs to the ATPase epsilon chain family. As to quaternary structure, F-type ATPases have 2 components, CF(1) - the catalytic core - and CF(0) - the membrane proton channel. CF(1) has five subunits: alpha(3), beta(3), gamma(1), delta(1), epsilon(1). CF(0) has three main subunits: a, b and c.

It is found in the plastid. It localises to the chloroplast thylakoid membrane. In terms of biological role, produces ATP from ADP in the presence of a proton gradient across the membrane. This is ATP synthase epsilon chain, chloroplastic from Trieres chinensis (Marine centric diatom).